Here is a 400-residue protein sequence, read N- to C-terminus: MSENILQDLEMVTCTAPVNIAVIKYWGKRDEDLILPVNASLSVTLHQDHLRTTTTIACSRSFHKDCIWLNGKEQDISHPRLQSCLLEIRRLAQRRKNTGDPASDVSNKVHICSVNNFPTAAGLASSAAGYACLVYTLSQLFNVEGELSGVARQGSGSACRSLYGGFVQWKLGEQSDGKDSIAEQVASELYWPELRVLILVVSAEQKSVGSTSGMHTSVETSHLLKYRADAVVPGRMEEMIRAIRLRDFPKFGELTMKDSNQFHAICLDTYPPIFYLNNISHQIISLVHRYNQYYGETRVAYTFDAGPNAVIYSLQDYLPEFVEVVRHFFPPEVNEEEFFKGLPVCPADLSEEMIRDINMKPTPNGIRYMISTKAGPGPRVVEDPNLHLLGADGLPKKSAV.

Residues 25 to 28 (YWGK), Arg80, 155 to 160 (SGSACR), and Thr211 each bind (R)-5-diphosphomevalonate.

The protein belongs to the diphosphomevalonate decarboxylase family. In terms of assembly, homodimer.

It localises to the cytoplasm. The catalysed reaction is (R)-5-diphosphomevalonate + ATP = isopentenyl diphosphate + ADP + phosphate + CO2. The protein operates within steroid biosynthesis; cholesterol biosynthesis. In terms of biological role, catalyzes the ATP dependent decarboxylation of (R)-5-diphosphomevalonate to form isopentenyl diphosphate (IPP). Functions in the mevalonate (MVA) pathway leading to isopentenyl diphosphate (IPP), a key precursor for the biosynthesis of isoprenoids and sterol synthesis. The sequence is that of Diphosphomevalonate decarboxylase (mvd) from Danio rerio (Zebrafish).